A 248-amino-acid polypeptide reads, in one-letter code: tRNA (guanine-N(1)-)-methyltransferase (248 aa).

Residues glycine 113 and 133–138 (IGDYVL) each bind S-adenosyl-L-methionine.

It belongs to the RNA methyltransferase TrmD family. In terms of assembly, homodimer.

The protein resides in the cytoplasm. The catalysed reaction is guanosine(37) in tRNA + S-adenosyl-L-methionine = N(1)-methylguanosine(37) in tRNA + S-adenosyl-L-homocysteine + H(+). Specifically methylates guanosine-37 in various tRNAs. The sequence is that of tRNA (guanine-N(1)-)-methyltransferase from Shewanella frigidimarina (strain NCIMB 400).